A 66-amino-acid polypeptide reads, in one-letter code: Beta-toxin Cll1m (66 aa).

Positions 1-66 (KEGYIVNLST…VWPLPKKTCT (66 aa)) constitute an LCN-type CS-alpha/beta domain. 4 disulfide bridges follow: C12/C65, C16/C41, C25/C46, and C29/C48. The residue at position 66 (T66) is a Threonine amide.

Belongs to the long (4 C-C) scorpion toxin superfamily. Sodium channel inhibitor family. Beta subfamily. Expressed by the venom gland.

Its subcellular location is the secreted. Its function is as follows. Beta toxins bind voltage-independently at site-4 of sodium channels (Nav) and shift the voltage of activation toward more negative potentials thereby affecting sodium channel activation and promoting spontaneous and repetitive firing. This chain is Beta-toxin Cll1m, found in Centruroides limpidus (Mexican scorpion).